Here is a 204-residue protein sequence, read N- to C-terminus: Oxidoreductase iacF (204 aa).

The protein belongs to the oxidoreductase OpS7 family.

Its pathway is secondary metabolite biosynthesis. Its function is as follows. Oxidoreductase; part of the gene cluster that mediates the biosynthesis of iso-A82775C, a enylepoxycyclohexane and biosynthetic precursor of the chloropestolide anticancer natural products. Within the cluster, the prenyltransferase iacE prenylates siccayne to generate pestalodiol E, using dimethylallyl diphosphate (DMAPP) as cosubstrate. The probable oxidoreductase iacF is then involved in the epoxidation of pestalodiol F to pestalodiol F, which is further converted to pestalofone A by the short-chain dehydrogenase/reductase iacG. Iso-A82775C is subsequently generated from pestalofone A by the short-chain dehydrogenase/reductase iacC. Iso-A82775C is further condensed with maldoxin via a Diels-Alder reaction to produce the anticancer natural products chloropestolides A to E. The polypeptide is Oxidoreductase iacF (Pestalotiopsis fici (strain W106-1 / CGMCC3.15140)).